The chain runs to 134 residues: S-adenosylmethionine decarboxylase proenzyme (134 aa).

The active-site Schiff-base intermediate with substrate; via pyruvic acid is the Ser-64. The residue at position 64 (Ser-64) is a Pyruvic acid (Ser); by autocatalysis. His-69 (proton acceptor; for processing activity) is an active-site residue. Catalysis depends on Cys-84, which acts as the Proton donor; for catalytic activity.

This sequence belongs to the prokaryotic AdoMetDC family. Type 1 subfamily. As to quaternary structure, heterotetramer of two alpha and two beta chains arranged as a dimer of alpha/beta heterodimers. It depends on pyruvate as a cofactor. Post-translationally, is synthesized initially as an inactive proenzyme. Formation of the active enzyme involves a self-maturation process in which the active site pyruvoyl group is generated from an internal serine residue via an autocatalytic post-translational modification. Two non-identical subunits are generated from the proenzyme in this reaction, and the pyruvate is formed at the N-terminus of the alpha chain, which is derived from the carboxyl end of the proenzyme. The post-translation cleavage follows an unusual pathway, termed non-hydrolytic serinolysis, in which the side chain hydroxyl group of the serine supplies its oxygen atom to form the C-terminus of the beta chain, while the remainder of the serine residue undergoes an oxidative deamination to produce ammonia and the pyruvoyl group blocking the N-terminus of the alpha chain.

The catalysed reaction is S-adenosyl-L-methionine + H(+) = S-adenosyl 3-(methylsulfanyl)propylamine + CO2. The protein operates within amine and polyamine biosynthesis; S-adenosylmethioninamine biosynthesis; S-adenosylmethioninamine from S-adenosyl-L-methionine: step 1/1. Catalyzes the decarboxylation of S-adenosylmethionine to S-adenosylmethioninamine (dcAdoMet), the propylamine donor required for the synthesis of the polyamines spermine and spermidine from the diamine putrescine. The protein is S-adenosylmethionine decarboxylase proenzyme of Hydrogenobaculum sp. (strain Y04AAS1).